Reading from the N-terminus, the 438-residue chain is Trigger factor (438 aa).

Residues 160–245 (DDKVTIDFVG…VKKIQQAELP (86 aa)) form the PPIase FKBP-type domain.

This sequence belongs to the FKBP-type PPIase family. Tig subfamily.

The protein localises to the cytoplasm. It carries out the reaction [protein]-peptidylproline (omega=180) = [protein]-peptidylproline (omega=0). Its function is as follows. Involved in protein export. Acts as a chaperone by maintaining the newly synthesized protein in an open conformation. Functions as a peptidyl-prolyl cis-trans isomerase. This is Trigger factor from Francisella tularensis subsp. novicida (strain U112).